The sequence spans 43 residues: Potassium channel toxin gamma-KTx 4.2 (43 aa).

4 disulfides stabilise this stretch: Cys5–Cys23, Cys11–Cys34, Cys20–Cys39, and Cys24–Cys41.

The protein belongs to the ergtoxin family. Gamma-KTx 4 subfamily. In terms of tissue distribution, expressed by the venom gland.

It localises to the secreted. Functionally, reversibly blocks Kv11/ERG potassium channels. This chain is Potassium channel toxin gamma-KTx 4.2, found in Centruroides noxius (Mexican scorpion).